The sequence spans 432 residues: Neuronal pentraxin-1 (432 aa).

The signal sequence occupies residues 1 to 22 (MLAGRAARTCALLALCLLGSGA). The interval 88 to 122 (RCESQSTLDSGPGEARSGGGRKQPGSGKNTMGDLS) is disordered. 2 N-linked (GlcNAc...) asparagine glycosylation sites follow: N154 and N193. The region spanning 226–428 (DKFQLTFPLR…GATKWTFEAC (203 aa)) is the Pentraxin (PTX) domain. C256 and C316 form a disulfide bridge. 5 residues coordinate Ca(2+): N280, E358, Q359, D360, and Q370.

In terms of assembly, homooligomer or heterooligomer (probably pentamer) with neuronal pentraxin receptor (NPTXR). It depends on Ca(2+) as a cofactor. In terms of tissue distribution, expressed in brain and kidney.

Its subcellular location is the secreted. The protein resides in the cytoplasmic vesicle. It localises to the secretory vesicle. It is found in the endoplasmic reticulum. Functionally, may be involved in mediating uptake of synaptic material during synapse remodeling or in mediating the synaptic clustering of AMPA glutamate receptors at a subset of excitatory synapses. In Mus musculus (Mouse), this protein is Neuronal pentraxin-1 (Nptx1).